Reading from the N-terminus, the 102-residue chain is Gastrin/cholecystokinin-like peptide (102 aa).

Residues methionine 1–cysteine 20 form the signal peptide. The propeptide occupies arginine 21–arginine 45. Tyrosine 86 carries the post-translational modification Sulfotyrosine. Phenylalanine amide is present on phenylalanine 92. Residues serine 96–serine 102 constitute a propeptide that is removed on maturation.

It belongs to the gastrin/cholecystokinin family. As to expression, expressed in antrum, duodenum, colon, pancreas, brain and testis. No expression found in kidney, lung, liver, skin or distal two-thirds of small intestine. In the brain, strongly expressed in the pituitary gland with moderate expression in the neural lobe, brain stem and hypothalamus.

It localises to the secreted. May control digestion processes. This Aquarana catesbeiana (American bullfrog) protein is Gastrin/cholecystokinin-like peptide (GAST).